A 591-amino-acid chain; its full sequence is Mono(ADP-ribosyl)transferase SpvB (591 aa).

The TR mART core domain maps to 373 to 576 (PMMGGNSSRP…LRLSDDATAD (204 aa)). Residues Arg414 and 471–477 (RGLKLDK) contribute to the NAD(+) site. Catalysis depends on residues Arg471, Ser501, and Glu538. Residue Glu538 coordinates NAD(+).

The protein belongs to the SpvB family.

The protein localises to the secreted. It carries out the reaction L-arginyl-[protein] + NAD(+) = N(omega)-(ADP-D-ribosyl)-L-arginyl-[protein] + nicotinamide + H(+). With respect to regulation, inhibited by novobiocin. Its function is as follows. Mono-ADP-ribosylates eukaryotic muscle and non-muscle actin on 'Arg-177'. ADP-ribosylates all actins tested, has more activity on nonmuscle beta/gamma-actin than on muscle alpha-actin. Prefers monomeric G-actin but can weakly ADP-ribosylate F-actin. ADP-ribosylation prevents the polymerization of G-actin to F-actin, causing actin filament depolymerization, destruction of the cytoskeleton and cytotoxicity. Does not possess NAD(+)-glycohydrolase activity, unlike most mART enzymes. This chain is Mono(ADP-ribosyl)transferase SpvB (spvB), found in Salmonella typhimurium.